A 126-amino-acid polypeptide reads, in one-letter code: Adenosine 5'-monophosphoramidase HINT1 (126 aa).

Alanine 2 carries the post-translational modification N-acetylalanine. One can recognise an HIT domain in the interval 18–126; it reads IFGKIIRKEI…GGRQMHWPPG (109 aa). N6-acetyllysine is present on residues lysine 21 and lysine 30. 43–44 lines the AMP pocket; the sequence is DI. Phosphoserine occurs at positions 45 and 72. AMP-binding positions include asparagine 99, 105–107, and 112–114; these read GQS and HLH. Positions 110–114 match the Histidine triad motif motif; that stretch reads HVHLH. The active-site Tele-AMP-histidine intermediate is the histidine 112.

Belongs to the HINT family. Homodimer. Interacts with CDK7. Interacts with RUVBL1 and RUVBL2 and is associated with the LEF1/TCF1-CTNNB1 complex and with a KAT5 histone acetyltransferase complex. Identified in a complex with MITF and CTNNB1. Interacts with CDC34 and RBX1, and is part of a SCF (SKP2-CUL1-F-box protein) E3 ubiquitin-protein ligase complex. Interacts with SUMO1, SUMO2 and RGS17. Interacts with the Ten-1 ICD form of TENM1. Interacts with CALM1; interaction increases in the presence of calcium ions.

It localises to the cytoplasm. The protein resides in the nucleus. The catalysed reaction is adenosine 5'-phosphoramidate + H2O = AMP + NH4(+). Functionally, exhibits adenosine 5'-monophosphoramidase activity, hydrolyzing purine nucleotide phosphoramidates with a single phosphate group such as adenosine 5'monophosphoramidate (AMP-NH2) to yield AMP and NH2. Hydrolyzes adenosine 5'monophosphomorpholidate (AMP-morpholidate) and guanosine 5'monophosphomorpholidate (GMP-morpholidate). Hydrolyzes lysyl-AMP (AMP-N-epsilon-(N-alpha-acetyl lysine methyl ester)) generated by lysine tRNA ligase, as well as Met-AMP, His-AMP and Asp-AMP, lysyl-GMP (GMP-N-epsilon-(N-alpha-acetyl lysine methyl ester)) and AMP-N-alanine methyl ester. Can also convert adenosine 5'-O-phosphorothioate and guanosine 5'-O-phosphorothioate to the corresponding nucleoside 5'-O-phosphates with concomitant release of hydrogen sulfide. In addition, functions as a scaffolding protein that modulates transcriptional activation by the LEF1/TCF1-CTNNB1 complex and by the complex formed with MITF and CTNNB1. Modulates p53/TP53 levels and p53/TP53-mediated apoptosis. Modulates proteasomal degradation of target proteins by the SCF (SKP2-CUL1-F-box protein) E3 ubiquitin-protein ligase complex. Also exhibits SUMO-specific isopeptidase activity, deconjugating SUMO1 from RANGAP1 and RGS17. The sequence is that of Adenosine 5'-monophosphoramidase HINT1 (HINT1) from Pongo abelii (Sumatran orangutan).